A 221-amino-acid chain; its full sequence is Serine/arginine-rich splicing factor 9 (221 aa).

2 RRM domains span residues 14–89 (GRIY…FPRA) and 111–187 (FRVL…PERG). Residue lysine 36 forms a Glycyl lysine isopeptide (Lys-Gly) (interchain with G-Cter in SUMO2) linkage. Over residues 187 to 198 (GTSYGCSRSRSG) the composition is skewed to low complexity. A disordered region spans residues 187 to 221 (GTSYGCSRSRSGSRGRDSPYQSRGSPHYFSPFRPY). Residues 188–200 (TSYGCSRSRSGSR) form an interaction with SAFB1 region. Serine 189, serine 193, serine 195, serine 204, serine 208, and serine 211 each carry phosphoserine. Phosphotyrosine is present on tyrosine 214. Residue serine 216 is modified to Phosphoserine.

It belongs to the splicing factor SR family. As to quaternary structure, interacts with KHDRBS3. Interacts with HABP4. Interacts with NOL3/ARC/NOP30. Interacts with NSEP1/YB-1/YB1. Interacts with SAFB/SAFB1. Interacts with SRSF6/SFRS6. Interacts with TRA2B/SFRS10. Interacts with C1QBP. May also interact with DUSP11/PIR1. In terms of processing, extensively phosphorylated on serine residues in the RS domain.

It localises to the nucleus. Plays a role in constitutive splicing and can modulate the selection of alternative splice sites. Represses the splicing of MAPT/Tau exon 10. In Rattus norvegicus (Rat), this protein is Serine/arginine-rich splicing factor 9 (Srsf9).